A 101-amino-acid chain; its full sequence is MSTIADPRDILLAPVISEKSYGLIEEGTYTFLVHPDSNKTQIKIAVEKIFGVTVTSVNTANRQGKRKRTRFGYGKRKDTKRALVTLSADSKPIEIFGGPVA.

This sequence belongs to the universal ribosomal protein uL23 family. In terms of assembly, part of the 50S ribosomal subunit. Contacts protein L29, and trigger factor when it is bound to the ribosome.

In terms of biological role, one of the early assembly proteins it binds 23S rRNA. One of the proteins that surrounds the polypeptide exit tunnel on the outside of the ribosome. Forms the main docking site for trigger factor binding to the ribosome. The chain is Large ribosomal subunit protein uL23 from Rhodococcus jostii (strain RHA1).